Here is a 176-residue protein sequence, read N- to C-terminus: Transmembrane protein 238 (176 aa).

The segment at 1–21 (MAAASPVCGSQASAVGASSPP) is disordered. Over 1 to 36 (MAAASPVCGSQASAVGASSPPAPAPAPAAGLGRCRM) the chain is Cytoplasmic. The segment covering 9-19 (GSQASAVGASS) has biased composition (low complexity). A helical transmembrane segment spans residues 37–57 (ALLLAVALDVAGMAALLTGVF). At 58–69 (AQLQVRGRDFGD) the chain is on the extracellular side. A helical membrane pass occupies residues 70–90 (LLIYSGALLVFLSLLGWILWY). The Cytoplasmic segment spans residues 91-176 (TGNIEISRQE…GSVAAGTGSE (86 aa)). Positions 124-135 (SAPATASPRTTA) are enriched in low complexity. A disordered region spans residues 124 to 156 (SAPATASPRTTAGLRSARRANRAPQPSSSGSRR). Ser-175 carries the phosphoserine modification.

The protein localises to the membrane. The polypeptide is Transmembrane protein 238 (Tmem238) (Mus musculus (Mouse)).